We begin with the raw amino-acid sequence, 149 residues long: Urease accessory protein UreE (149 aa).

It belongs to the UreE family.

The protein resides in the cytoplasm. In terms of biological role, involved in urease metallocenter assembly. Binds nickel. Probably functions as a nickel donor during metallocenter assembly. This Prochlorococcus marinus (strain MIT 9312) protein is Urease accessory protein UreE.